The sequence spans 508 residues: UDP-N-acetylmuramoyl-L-alanyl-D-glutamate--2,6-diaminopimelate ligase (508 aa).

A UDP-N-acetyl-alpha-D-muramoyl-L-alanyl-D-glutamate-binding site is contributed by serine 43. 124–130 (GTNGKTT) contributes to the ATP binding site. UDP-N-acetyl-alpha-D-muramoyl-L-alanyl-D-glutamate contacts are provided by residues 166-167 (TT), serine 193, and arginine 201. At lysine 233 the chain carries N6-carboxylysine. Meso-2,6-diaminopimelate-binding positions include arginine 404, 428-431 (DNPR), glycine 478, and glutamate 482. The short motif at 428–431 (DNPR) is the Meso-diaminopimelate recognition motif element.

Belongs to the MurCDEF family. MurE subfamily. It depends on Mg(2+) as a cofactor. Post-translationally, carboxylation is probably crucial for Mg(2+) binding and, consequently, for the gamma-phosphate positioning of ATP.

The protein resides in the cytoplasm. It catalyses the reaction UDP-N-acetyl-alpha-D-muramoyl-L-alanyl-D-glutamate + meso-2,6-diaminopimelate + ATP = UDP-N-acetyl-alpha-D-muramoyl-L-alanyl-gamma-D-glutamyl-meso-2,6-diaminopimelate + ADP + phosphate + H(+). It functions in the pathway cell wall biogenesis; peptidoglycan biosynthesis. Functionally, catalyzes the addition of meso-diaminopimelic acid to the nucleotide precursor UDP-N-acetylmuramoyl-L-alanyl-D-glutamate (UMAG) in the biosynthesis of bacterial cell-wall peptidoglycan. This chain is UDP-N-acetylmuramoyl-L-alanyl-D-glutamate--2,6-diaminopimelate ligase, found in Chlorobaculum tepidum (strain ATCC 49652 / DSM 12025 / NBRC 103806 / TLS) (Chlorobium tepidum).